A 747-amino-acid chain; its full sequence is Mediator of RNA polymerase II transcription subunit 25 (747 aa).

Residues methionine 1–leucine 226 form an interaction with the Mediator complex region. 2 disordered regions span residues glycine 233–valine 274 and leucine 299–glycine 390. 2 stretches are compositionally biased toward pro residues: residues glutamine 263–tyrosine 272 and proline 326–serine 342. An interaction with VP16 region spans residues leucine 389 to asparagine 543. The tract at residues valine 395 to lysine 545 is interaction with CREBBP. Positions glutamine 548–isoleucine 747 are disordered. 2 interaction with RARA regions span residues alanine 564–proline 653 and proline 640–glutamine 707. Residues alanine 598 to alanine 611 show a composition bias toward low complexity. Positions glutamine 612–isoleucine 634 are enriched in pro residues. The LXXLL motif signature appears at leucine 646 to leucine 650. Composition is skewed to pro residues over residues asparagine 652–glutamine 664, proline 673–histidine 683, and leucine 691–proline 713. An Asymmetric dimethylarginine modification is found at arginine 725. Over residues methionine 738–isoleucine 747 the composition is skewed to acidic residues.

The protein belongs to the Mediator complex subunit 25 family. As to quaternary structure, component of the Mediator complex, which is composed of MED1, MED4, MED6, MED7, MED8, MED9, MED10, MED11, MED12, MED13, MED13L, MED14, MED15, MED16, MED17, MED18, MED19, MED20, MED21, MED22, MED23, MED24, MED25, MED26, MED27, MED29, MED30, MED31, CCNC, CDK8 and CDC2L6/CDK11. The MED12, MED13, CCNC and CDK8 subunits form a distinct module termed the CDK8 module. Mediator containing the CDK8 module is less active than Mediator lacking this module in supporting transcriptional activation. Individual preparations of the Mediator complex lacking one or more distinct subunits have been variously termed ARC, CRSP, DRIP, PC2, SMCC and TRAP. Interacts with CREBBP. Interacts with ESR1, GR, RARA, RXRA and THRB in a ligand-dependent fashion. Binds the Herpes simplex virus activator VP16. In terms of tissue distribution, ubiquitously expressed. Highest levels in brain, heart, kidney, peripheral leukocytes, placenta, skeletal muscle and spleen.

Its subcellular location is the nucleus. Functionally, component of the Mediator complex, a coactivator involved in the regulated transcription of nearly all RNA polymerase II-dependent genes. Mediator functions as a bridge to convey information from gene-specific regulatory proteins to the basal RNA polymerase II transcription machinery. Mediator is recruited to promoters by direct interactions with regulatory proteins and serves as a scaffold for the assembly of a functional preinitiation complex with RNA polymerase II and the general transcription factors. Required for RARA/RXRA-mediated transcription. The polypeptide is Mediator of RNA polymerase II transcription subunit 25 (MED25) (Homo sapiens (Human)).